Consider the following 397-residue polypeptide: RNA pseudouridine synthase 5 (397 aa).

Residues 64 to 114 (APLPGWIKRIRDGQITVDGEVATDPDMILREGSKLVYHRLPWQEPFAPHLL) enclose the S4 RNA-binding domain.

It belongs to the pseudouridine synthase RluA family.

It carries out the reaction a uridine in RNA = a pseudouridine in RNA. The chain is RNA pseudouridine synthase 5 from Oryza sativa subsp. japonica (Rice).